A 686-amino-acid chain; its full sequence is Pheromone-processing carboxypeptidase KEX1 (686 aa).

The signal sequence occupies residues 1-19 (MKFLLPTFIIFIYTLLVSA). The Lumenal portion of the chain corresponds to 20–543 (LPTKEGSDPK…SDSTSSKFTR (524 aa)). N-linked (GlcNAc...) asparagine glycans are attached at residues N85 and N122. Catalysis depends on residues S184 and D394. N441 and N449 each carry an N-linked (GlcNAc...) asparagine glycan. H452 is a catalytic residue. Residues 489–519 (LGSRKENDESKNPVESPSQTIDPIISSSSSS) are disordered. A compositionally biased stretch (basic and acidic residues) spans 491 to 500 (SRKENDESKN). The segment covering 504 to 519 (SPSQTIDPIISSSSSS) has biased composition (low complexity). Residues 544–564 (LIQLAVILVIFWGVYVLYASY) form a helical membrane-spanning segment. Topologically, residues 565–686 (KSRPSSIIKK…SDPATHKSVS (122 aa)) are cytoplasmic. 2 disordered regions span residues 570–590 (SIIK…TGKK) and 627–686 (KDTR…KSVS). A compositionally biased stretch (low complexity) spans 576–586 (TNNTSNITRSS). Basic and acidic residues-rich tracts occupy residues 627–641 (KDTR…REND) and 674–686 (QPRS…KSVS).

The protein belongs to the peptidase S10 family.

It localises to the golgi apparatus. Its subcellular location is the trans-Golgi network membrane. The catalysed reaction is Preferential release of a C-terminal arginine or lysine residue.. Functionally, protease with a carboxypeptidase B-like function involved in the C-terminal processing of the lysine and arginine residues from protein precursors. Promotes cell fusion and is involved in the programmed cell death. In Candida dubliniensis (strain CD36 / ATCC MYA-646 / CBS 7987 / NCPF 3949 / NRRL Y-17841) (Yeast), this protein is Pheromone-processing carboxypeptidase KEX1 (KEX1).